The following is a 48-amino-acid chain: Delta-stichotoxin-Hcr1a (48 aa).

3 disulfides stabilise this stretch: C3/C43, C5/C33, and C26/C44. K48 is subject to Lysine amide; partial; in Delta-stichotoxin-Hcr1f.

The protein belongs to the sea anemone sodium channel inhibitory toxin family. Type II subfamily. In terms of assembly, probably composed of two peptide chains of 12 and 35 residues connected by two disulfide bonds (Cys-3-Cys-43 and Cys-5-Cys-33). In terms of processing, delta-SHTX-Hcr1f (RTX-VI) may be the result of post-translational modification of delta-SHTX-Hcr1a (RTX-III), which would consist of Arg-13 cleavage.

The protein localises to the secreted. It is found in the nematocyst. Its function is as follows. Binds to site 3 of voltage-gated sodium channels and inhibits the inactivation process. Specifically inhibits mammalian Nav1.3/SCN3A and Nav1.6/SCN8A sodium channels, as well as insect BgNav1 and VdNav1 sodium channels. Binds to site 3 of voltage-gated sodium channels and inhibits the inactivation process. Specifically inhibits mammalian Nav1.2/SCN3A (low inhibition) and Nav1.6/SCN8A sodium channels, as well as insect BgNav1 and VdNav1 sodium channels. In Radianthus crispa (Leathery sea anemone), this protein is Delta-stichotoxin-Hcr1a.